An 802-amino-acid polypeptide reads, in one-letter code: Sucrose synthase 1 (802 aa).

The tract at residues 272–749 is GT-B glycosyltransferase; sequence MMFNVVILSP…GLQRIYEKYT (478 aa).

The protein belongs to the glycosyltransferase 1 family. Plant sucrose synthase subfamily.

The enzyme catalyses an NDP-alpha-D-glucose + D-fructose = a ribonucleoside 5'-diphosphate + sucrose + H(+). Functionally, sucrose-cleaving enzyme that provides UDP-glucose and fructose for various metabolic pathways. Most active in the sink tissues where it is responsible for the breakdown of the arriving sucrose. The chain is Sucrose synthase 1 (SH-1) from Zea mays (Maize).